Consider the following 484-residue polypeptide: Glutamyl-tRNA(Gln) amidotransferase subunit B, mitochondrial (484 aa).

The protein belongs to the GatB/GatE family. GatB subfamily. Subunit of the heterotrimeric GatFAB amidotransferase (AdT) complex, composed of A, B and F subunits.

It localises to the mitochondrion. It carries out the reaction L-glutamyl-tRNA(Gln) + L-glutamine + ATP + H2O = L-glutaminyl-tRNA(Gln) + L-glutamate + ADP + phosphate + H(+). Allows the formation of correctly charged Gln-tRNA(Gln) through the transamidation of misacylated Glu-tRNA(Gln) in the mitochondria. The reaction takes place in the presence of glutamine and ATP through an activated gamma-phospho-Glu-tRNA(Gln). This Candida tropicalis (strain ATCC MYA-3404 / T1) (Yeast) protein is Glutamyl-tRNA(Gln) amidotransferase subunit B, mitochondrial.